The primary structure comprises 259 residues: Methionine aminopeptidase (259 aa).

A substrate-binding site is contributed by histidine 78. A divalent metal cation-binding residues include aspartate 95, aspartate 106, and histidine 169. Histidine 176 contributes to the substrate binding site. Residue glutamate 202 coordinates a divalent metal cation. Tryptophan 220 is a binding site for substrate. Glutamate 234 provides a ligand contact to a divalent metal cation.

Belongs to the peptidase M24A family. Methionine aminopeptidase type 1 subfamily. In terms of assembly, monomer. Co(2+) serves as cofactor. Zn(2+) is required as a cofactor. Requires Mn(2+) as cofactor. It depends on Fe(2+) as a cofactor.

It carries out the reaction Release of N-terminal amino acids, preferentially methionine, from peptides and arylamides.. Its function is as follows. Removes the N-terminal methionine from nascent proteins. The N-terminal methionine is often cleaved when the second residue in the primary sequence is small and uncharged (Met-Ala-, Cys, Gly, Pro, Ser, Thr, or Val). Requires deformylation of the N(alpha)-formylated initiator methionine before it can be hydrolyzed. The polypeptide is Methionine aminopeptidase (Rickettsia prowazekii (strain Madrid E)).